A 136-amino-acid polypeptide reads, in one-letter code: MLQPVRTKYRKAHKGRIHGTATRASKINYGSFALKAMAPERIIGKQIEAARVALTRHMKRQGRVWTRIFPNIPVSKKPVEVRMGKGKGAPEYWACRVKPGRILFEIDGVSETIAKEALYKASAKLPIKTKFIKRFA.

The protein belongs to the universal ribosomal protein uL16 family. As to quaternary structure, part of the 50S ribosomal subunit.

In terms of biological role, binds 23S rRNA and is also seen to make contacts with the A and possibly P site tRNAs. This is Large ribosomal subunit protein uL16 from Pelagibacter ubique (strain HTCC1062).